Here is a 102-residue protein sequence, read N- to C-terminus: NADH-quinone oxidoreductase subunit K (102 aa).

3 helical membrane passes run 6 to 26 (MEHG…GLMV), 30 to 50 (ILFV…AFVV), and 62 to 82 (IMFI…LAIL).

Belongs to the complex I subunit 4L family. In terms of assembly, NDH-1 is composed of 13 different subunits. Subunits NuoA, H, J, K, L, M, N constitute the membrane sector of the complex.

It is found in the cell inner membrane. It catalyses the reaction a quinone + NADH + 5 H(+)(in) = a quinol + NAD(+) + 4 H(+)(out). Its function is as follows. NDH-1 shuttles electrons from NADH, via FMN and iron-sulfur (Fe-S) centers, to quinones in the respiratory chain. The immediate electron acceptor for the enzyme in this species is believed to be ubiquinone. Couples the redox reaction to proton translocation (for every two electrons transferred, four hydrogen ions are translocated across the cytoplasmic membrane), and thus conserves the redox energy in a proton gradient. The sequence is that of NADH-quinone oxidoreductase subunit K from Azotobacter vinelandii (strain DJ / ATCC BAA-1303).